We begin with the raw amino-acid sequence, 155 residues long: Protein E6 (155 aa).

2 zinc fingers span residues 31-67 (CIFC…CLAC) and 104-140 (CCKC…CLHC).

This sequence belongs to the papillomaviridae E6 protein family. As to quaternary structure, forms homodimers. Interacts with ubiquitin-protein ligase UBE3A/E6-AP; this interaction stimulates UBE3A ubiquitin activity. Interacts with host TP53 and EP300; this interaction inhibits TP53 activity.

Its subcellular location is the host cytoplasm. The protein resides in the host nucleus. This protein may be involved in the oncogenic potential of this virus (cervical neoplasia-associated virus). In terms of biological role, plays a major role in the induction and maintenance of cellular transformation. E6 associates with host UBE3A/E6-AP ubiquitin-protein ligase and modulates its activity. Sequesters tumor suppressor TP53 in the host cytoplasm and modulates its activity by interacting with host EP300 that results in the reduction of TP53 acetylation and activation. In turn, apoptosis induced by DNA damage is inhibited. E6 also protects host keratinocytes from apoptosis by mediating the degradation of host BAK1. May also inhibit host immune response. The protein is Protein E6 of Human papillomavirus 43.